A 123-amino-acid polypeptide reads, in one-letter code: Small ribosomal subunit protein uS12 (123 aa).

Positions 1–21 (MPTIEQLVRKGRQAKPKKSKT) are disordered. Residues 9-20 (RKGRQAKPKKSK) show a composition bias toward basic residues. Asp-89 carries the post-translational modification 3-methylthioaspartic acid.

This sequence belongs to the universal ribosomal protein uS12 family. As to quaternary structure, part of the 30S ribosomal subunit. Contacts proteins S8 and S17. May interact with IF1 in the 30S initiation complex.

Its function is as follows. With S4 and S5 plays an important role in translational accuracy. In terms of biological role, interacts with and stabilizes bases of the 16S rRNA that are involved in tRNA selection in the A site and with the mRNA backbone. Located at the interface of the 30S and 50S subunits, it traverses the body of the 30S subunit contacting proteins on the other side and probably holding the rRNA structure together. The combined cluster of proteins S8, S12 and S17 appears to hold together the shoulder and platform of the 30S subunit. The protein is Small ribosomal subunit protein uS12 of Bifidobacterium adolescentis (strain ATCC 15703 / DSM 20083 / NCTC 11814 / E194a).